The sequence spans 88 residues: Sm-like protein LSM5 (88 aa).

An N-acetylalanine modification is found at Ala-2. Residues Leu-9–Pro-84 enclose the Sm domain.

The protein belongs to the snRNP Sm proteins family. As to quaternary structure, component of the heptameric LSM1-LSM7 complex that forms a seven-membered ring structure with a donut shape. The LSM subunits are arranged in the order LSM1, LSM2, LSM3, LSM6, LSM5, LSM7 and LSM4. Component of the heptameric LSM2-LSM8 complex that forms a seven-membered ring structure with a donut shape. The LSM subunits are arranged in the order LSM8, LSM2, LSM3, LSM6, LSM5, LSM7 and LSM4. LSM2 subunit interacts only with its two neighboring subunits, LSM6A or LSM6B and LSM7. Expressed in roots, leaves, stems, flowers and siliques.

The protein resides in the cytoplasm. It localises to the nucleus. Its function is as follows. Component of LSM protein complexes, which are involved in RNA processing. Component of the cytoplasmic LSM1-LSM7 complex which is involved in mRNA degradation by promoting decapping and leading to accurate 5'-3' mRNA decay. The cytoplasmic LSM1-LSM7 complex regulates developmental gene expression by the decapping of specific development-related transcripts. Component of the nuclear LSM2-LSM8 complex which is involved splicing nuclear mRNAs. LSM2-LSM8 binds directly to the U6 small nuclear RNAs (snRNAs) and is essential for accurate splicing of selected development-related mRNAs through the stabilization of the spliceosomal U6 snRNA. Plays a critical role in the regulation of development-related gene expression. Involved in the control of plant sensitivity to abscisic acid (ABA) and drought. Functions with ABH1 as negative regulator of ABA signaling in guard cells. Required for regulation of splicing efficiency of many stress-responsive genes under stress conditions. This is Sm-like protein LSM5 from Arabidopsis thaliana (Mouse-ear cress).